We begin with the raw amino-acid sequence, 580 residues long: Micronemal protein 4 (580 aa).

The N-terminal stretch at methionine 1–alanine 25 is a signal peptide. Apple domains are found at residues cysteine 68–cysteine 137, cysteine 141–cysteine 214, cysteine 232–cysteine 301, cysteine 305–glycine 375, cysteine 419–cysteine 488, and cysteine 492–cysteine 565. Intrachain disulfides connect cysteine 68–cysteine 137, cysteine 93–cysteine 115, cysteine 97–cysteine 103, cysteine 141–cysteine 214, cysteine 166–cysteine 188, cysteine 170–cysteine 176, cysteine 232–cysteine 301, cysteine 257–cysteine 279, cysteine 261–cysteine 267, cysteine 305–cysteine 380, cysteine 332–cysteine 354, cysteine 336–cysteine 342, cysteine 419–cysteine 488, cysteine 444–cysteine 466, and cysteine 448–cysteine 454.

Monomer. Part of the MIC6-MIC1-MIC4 complex. Interacts (via the second apple domain) directly with MIC1 (via the beta-finger region). Interacts with murine TLR2; the interaction promotes activation of bone marrow-derived dendritic cells and macrophages in the host. Interacts with murine TLR4; the interaction promotes activation of bone marrow-derived dendritic cells and macrophages in the host. Post-translationally, proteolytically cleaved at the N- and C-terminus after release from the microneme.

The protein resides in the cytoplasmic vesicle. The protein localises to the secretory vesicle. Its subcellular location is the microneme. It localises to the host early endosome. With respect to regulation, lacto-N-biose inhibits binding to asialofetuin, a host glycoprotein. In terms of biological role, soluble adhesin with carbohydrate-binding activity. Binds to galactose-terminating oligosaccharides. Required for attachment of the parasite to the host cell prior to invasion. Triggers the activation of murine bone marrow-derived dendritic cells and macrophages and production of pro-inflammatory cytokines, such as IL12 (IL12B/IL12A), in host TLR2/TLR4-dependent manner. Triggers the production of anti-inflammatory cytokine IL10 in murine bone marrow-derived macrophages in host TLR4-dependent manner. Induces transient endotoxin tolerance in murine bone marrow-derived macrophages, manifested by reduced TNF-alpha (TNF) production in response to challenge with lipopolysaccharides (LPS). The sequence is that of Micronemal protein 4 from Toxoplasma gondii.